A 426-amino-acid chain; its full sequence is UPF0164 protein TP_0548 (426 aa).

The signal sequence occupies residues 1–37; that stretch reads MISCSVRRRPRWEPQVGAAFLAFALLPVLASGRGMQA.

This sequence belongs to the UPF0164 family.

The sequence is that of UPF0164 protein TP_0548 from Treponema pallidum (strain Nichols).